Here is a 145-residue protein sequence, read N- to C-terminus: Peptide methionine sulfoxide reductase MsrB (145 aa).

In terms of domain architecture, MsrB spans 6-129 (EEELKQTLTD…NAAALRFVPV (124 aa)). Cysteine 118 serves as the catalytic Nucleophile.

It belongs to the MsrB Met sulfoxide reductase family.

The catalysed reaction is L-methionyl-[protein] + [thioredoxin]-disulfide + H2O = L-methionyl-(R)-S-oxide-[protein] + [thioredoxin]-dithiol. The protein is Peptide methionine sulfoxide reductase MsrB of Enterococcus faecalis (strain ATCC 700802 / V583).